We begin with the raw amino-acid sequence, 147 residues long: Putative nickel-responsive regulator (147 aa).

4 residues coordinate Ni(2+): His-76, His-87, His-89, and Cys-95.

The protein belongs to the transcriptional regulatory CopG/NikR family. It depends on Ni(2+) as a cofactor.

Its function is as follows. Transcriptional regulator. This Rhodopseudomonas palustris (strain TIE-1) protein is Putative nickel-responsive regulator.